An 843-amino-acid polypeptide reads, in one-letter code: Proto-oncogene vav (843 aa).

Positions 1–119 constitute a Calponin-homology (CH) domain; it reads MELWRQCTHW…YTLSALSWTP (119 aa). Residues 194–373 form the DH domain; that stretch reads KRCCCLREIQ…RDLAQCVNEV (180 aa). The 103-residue stretch at 402–504 folds into the PH domain; that stretch reads RPKIDGELKI…WMEQFEMAIS (103 aa). The Phorbol-ester/DAG-type zinc-finger motif lies at 515 to 564; the sequence is GHDFQMFSFEETTSCKACQMLLRGTFYQGYRCYRCRAPAHKECLGRVPPC. Residues 590–658 enclose the SH3 1 domain; sequence LGLPKMEVCQ…PCNRVRPYVH (69 aa). Positions 669 to 763 constitute an SH2 domain; sequence WYAGPMERAG…SLDTTLQFPY (95 aa). The SH3 2 domain maps to 780-840; that stretch reads KYFGTAKARY…PSNYVEEDYS (61 aa). Y824 and Y842 each carry phosphotyrosine.

In terms of assembly, interacts with SHB. Interacts with APS, DOCK2, GRB2, GRB3, DOCK2, SLA, TEC and ZNF655/VIK. Interacts with SIAH2; without leading to its degradation. Associates with BLNK, PLCG1, GRB2 and NCK1 in a B-cell antigen receptor-dependent fashion. Interacts with CBLB; which inhibits tyrosine phosphorylation and down-regulates activity. May interact with CCPG1. Interacts with CLNK. Interacts with THEMIS2. Interacts with NEK3 and this interaction is prolactin-dependent. Interacts with ITK. Interacts with PTK2B/PYK2. Interacts with HCK. Interacts with PTK2B/PYK2. Interacts (via SH2 domain) with SYK. Interacts with ANKRD54. Interacts with CD6. Interacts with LCP2; this interaction plays a role in TCR-mediated cytokine production. Phosphorylated by FYN. Phosphorylated on tyrosine residues by HCK in response to IFNG and bacterial lipopolysaccharide (LPS).

Its function is as follows. Couples tyrosine kinase signals with the activation of the Rho/Rac GTPases, thus leading to cell differentiation and/or proliferation. The sequence is that of Proto-oncogene vav (Vav1) from Rattus norvegicus (Rat).